A 1063-amino-acid polypeptide reads, in one-letter code: Valine--tRNA ligase, mitochondrial (1063 aa).

The N-terminal 26 residues, 1 to 26, are a transit peptide targeting the mitochondrion; the sequence is MPHLPLASFRPPFWGLRHSRGLPRFH. The segment at 25–53 is disordered; sequence FHSVSTQSEPHGSPISRRNREAKQKRLRE. Over residues 42-53 the composition is skewed to basic and acidic residues; it reads RNREAKQKRLRE. The short motif at 146-156 is the 'HIGH' region element; it reads PNVTGSLHIGH. The 'KMSKS' region signature appears at 658–662; sequence KMSKS. Lys661 is an ATP binding site.

Belongs to the class-I aminoacyl-tRNA synthetase family.

Its subcellular location is the mitochondrion. The enzyme catalyses tRNA(Val) + L-valine + ATP = L-valyl-tRNA(Val) + AMP + diphosphate. Catalyzes the attachment of valine to tRNA(Val) in a two-step reaction: valine is first activated by ATP to form Val-AMP and then transferred to the acceptor end of tRNA(Val). The sequence is that of Valine--tRNA ligase, mitochondrial (VARS2) from Homo sapiens (Human).